The primary structure comprises 715 residues: Protein MTSS 2 (715 aa).

The IMD domain occupies 1 to 249; it reads METAEKECGA…EQVIKDLKGS (249 aa). Residues 134–156 are a coiled coil; it reads HEIKKKSSDTLKLQKKARKGKGD. Low complexity-rich tracts occupy residues 253–274, 284–295, and 312–330; these read WSYQ…SMCS, SSVSSHDSGFVS, and TSQK…TCQS. Disordered stretches follow at residues 253 to 405, 420 to 485, and 527 to 562; these read WSYQ…EVSP, LEHQ…RNSN, and IRRT…PTVP. Thr257 bears the Phosphothreonine mark. Residue Ser261 is modified to Phosphoserine. Residues 331 to 341 show a composition bias toward polar residues; sequence VSECSSPTSDW. Residues 360–369 are compositionally biased toward basic and acidic residues; the sequence is DRVEHLRDTE. A Phosphoserine modification is found at Ser404. Positions 429 to 442 are enriched in low complexity; sequence SLQYSSGYSTQTTT. Positions 443–455 are enriched in polar residues; sequence PSCSEDTIPSQGS. Phosphoserine is present on residues Ser542, Ser564, Ser575, Ser587, Ser597, and Ser602. The residue at position 606 (Thr606) is a Phosphothreonine. A disordered region spans residues 661–690; sequence FPFPTALSATPSEETPTPPPAATSDPPAED. One can recognise a WH2 domain in the interval 687–704; that stretch reads PAEDMLVAIRRGVRLRRT.

Belongs to the MTSS family. Interacts (via IMD domain) with RAC1; this interaction may be important to potentiate PDGF-induced RAC1 activation.

It is found in the cytoplasm. The protein localises to the cell projection. Its subcellular location is the ruffle. In terms of biological role, involved in plasma membrane dynamics. Potentiated PDGF-mediated formation of membrane ruffles and lamellipodia in fibroblasts, acting via RAC1 activation. May function in actin bundling. The polypeptide is Protein MTSS 2 (Mtss2) (Mus musculus (Mouse)).